Consider the following 560-residue polypeptide: Oxygen-dependent choline dehydrogenase (560 aa).

8-37 (DYIIIGAGSAGNVLATRLTEDADVSVLLLE) lines the FAD pocket. Catalysis depends on histidine 475, which acts as the Proton acceptor.

This sequence belongs to the GMC oxidoreductase family. Requires FAD as cofactor.

The catalysed reaction is choline + A = betaine aldehyde + AH2. It carries out the reaction betaine aldehyde + NAD(+) + H2O = glycine betaine + NADH + 2 H(+). It functions in the pathway amine and polyamine biosynthesis; betaine biosynthesis via choline pathway; betaine aldehyde from choline (cytochrome c reductase route): step 1/1. In terms of biological role, involved in the biosynthesis of the osmoprotectant glycine betaine. Catalyzes the oxidation of choline to betaine aldehyde and betaine aldehyde to glycine betaine at the same rate. This Stenotrophomonas maltophilia (strain R551-3) protein is Oxygen-dependent choline dehydrogenase.